The chain runs to 898 residues: Alanine--tRNA ligase (898 aa).

4 residues coordinate Zn(2+): H582, H586, C685, and H689.

Belongs to the class-II aminoacyl-tRNA synthetase family. The cofactor is Zn(2+).

Its subcellular location is the cytoplasm. The enzyme catalyses tRNA(Ala) + L-alanine + ATP = L-alanyl-tRNA(Ala) + AMP + diphosphate. Its function is as follows. Catalyzes the attachment of alanine to tRNA(Ala) in a two-step reaction: alanine is first activated by ATP to form Ala-AMP and then transferred to the acceptor end of tRNA(Ala). Also edits incorrectly charged Ser-tRNA(Ala) and Gly-tRNA(Ala) via its editing domain. This chain is Alanine--tRNA ligase, found in Mycolicibacterium vanbaalenii (strain DSM 7251 / JCM 13017 / BCRC 16820 / KCTC 9966 / NRRL B-24157 / PYR-1) (Mycobacterium vanbaalenii).